Reading from the N-terminus, the 306-residue chain is Porphobilinogen deaminase (306 aa).

S-(dipyrrolylmethanemethyl)cysteine is present on C241.

Belongs to the HMBS family. As to quaternary structure, monomer. It depends on dipyrromethane as a cofactor.

It catalyses the reaction 4 porphobilinogen + H2O = hydroxymethylbilane + 4 NH4(+). The protein operates within porphyrin-containing compound metabolism; protoporphyrin-IX biosynthesis; coproporphyrinogen-III from 5-aminolevulinate: step 2/4. Its function is as follows. Tetrapolymerization of the monopyrrole PBG into the hydroxymethylbilane pre-uroporphyrinogen in several discrete steps. The sequence is that of Porphobilinogen deaminase from Acidithiobacillus ferrooxidans (strain ATCC 23270 / DSM 14882 / CIP 104768 / NCIMB 8455) (Ferrobacillus ferrooxidans (strain ATCC 23270)).